The chain runs to 117 residues: uncharacterized protein (117 aa).

Its subcellular location is the mitochondrion. This is an uncharacterized protein from Arabidopsis thaliana (Mouse-ear cress).